Consider the following 479-residue polypeptide: Bifunctional aspartate aminotransferase and glutamate/aspartate-prephenate aminotransferase (479 aa).

The N-terminal 79 residues, 1–79, are a transit peptide targeting the chloroplast; the sequence is MAATTTTSSS…VEVDISLSPR (79 aa). Glycine 111 is a binding site for L-aspartate. 172–173 lines the pyridoxal 5'-phosphate pocket; it reads AK. Residues tryptophan 197 and asparagine 247 each coordinate L-aspartate. Pyridoxal 5'-phosphate contacts are provided by residues asparagine 247, tyrosine 279, and 307 to 309; that span reads GFS. Lysine 310 carries the N6-(pyridoxal phosphate)lysine modification. Arginine 318 contributes to the pyridoxal 5'-phosphate binding site. Residue arginine 449 coordinates L-aspartate.

It belongs to the class-I pyridoxal-phosphate-dependent aminotransferase family. Homodimer. It depends on pyridoxal 5'-phosphate as a cofactor. Expressed in flowers, pistils, stamens, ovaries and at lower levels in leaves and sepals.

It localises to the plastid. Its subcellular location is the chloroplast. The catalysed reaction is L-aspartate + 2-oxoglutarate = oxaloacetate + L-glutamate. It carries out the reaction L-arogenate + oxaloacetate = prephenate + L-aspartate. The enzyme catalyses L-arogenate + 2-oxoglutarate = prephenate + L-glutamate. Its pathway is amino-acid biosynthesis; L-phenylalanine biosynthesis; L-arogenate from prephenate (L-Asp route): step 1/1. It participates in amino-acid biosynthesis; L-phenylalanine biosynthesis; L-arogenate from prephenate (L-Glu route): step 1/1. Prokaryotic-type aspartate aminotransferase. Also has a prenate transaminase activity. Involved in the aromatic amino acids biosynthesis pathway via the arogenate route. Required for the transamination of prephenate into arogenate. Can use 2-oxoglutarate, oxaloacetate and prephenate as substrates, but not phenylpyruvate or 4-hydroxyphenylpyruvate. The protein is Bifunctional aspartate aminotransferase and glutamate/aspartate-prephenate aminotransferase of Petunia hybrida (Petunia).